The primary structure comprises 84 residues: MKTLLLTLVVVTIVCLDLGYTRKCLNTPLPLIYTTCPIGQDKCVKMTIKKLPSKYDVIRGCTDICPKSSADVVVVCCDTNKCDK.

The N-terminal stretch at 1 to 21 (MKTLLLTLVVVTIVCLDLGYT) is a signal peptide. Disulfide bonds link cysteine 24–cysteine 43, cysteine 36–cysteine 61, cysteine 65–cysteine 76, and cysteine 77–cysteine 82.

The protein belongs to the three-finger toxin family. Short-chain subfamily. Aminergic toxin sub-subfamily. As to expression, expressed by the venom gland.

The protein resides in the secreted. In terms of biological role, acts as a beta-blocker by binding to beta-1 and beta-2 adrenergic receptors (ADRB1 and ADRB2). It dose-dependently decreases the heart rate (bradycardia), whereas conventional cardiotoxins increases it. At 100 mg/kg, intraperitoneal injection into mice provokes labored breathing, impaired locomotion, lack of response to external stimuli, and death (after 30 minutes). The protein is Beta-cardiotoxin CTX14 of Ophiophagus hannah (King cobra).